The primary structure comprises 226 residues: Orotate phosphoribosyltransferase (226 aa).

Residue K30 coordinates 5-phospho-alpha-D-ribose 1-diphosphate. 38-39 provides a ligand contact to orotate; that stretch reads FF. Residues 76 to 77, R106, K107, K110, H112, and 132 to 140 each bind 5-phospho-alpha-D-ribose 1-diphosphate; these read YK and DDVMTAGTA. Orotate is bound by residues T136 and R164.

It belongs to the purine/pyrimidine phosphoribosyltransferase family. PyrE subfamily. As to quaternary structure, homodimer.

It catalyses the reaction orotidine 5'-phosphate + diphosphate = orotate + 5-phospho-alpha-D-ribose 1-diphosphate. It functions in the pathway pyrimidine metabolism; UMP biosynthesis via de novo pathway; UMP from orotate: step 1/2. Functionally, catalyzes the transfer of a ribosyl phosphate group from 5-phosphoribose 1-diphosphate to orotate, leading to the formation of orotidine monophosphate (OMP). In Kluyveromyces lactis (strain ATCC 8585 / CBS 2359 / DSM 70799 / NBRC 1267 / NRRL Y-1140 / WM37) (Yeast), this protein is Orotate phosphoribosyltransferase (URA5).